Here is a 222-residue protein sequence, read N- to C-terminus: Ribulose-phosphate 3-epimerase (222 aa).

Residue Ser7 participates in substrate binding. 3 residues coordinate a divalent metal cation: His32, Asp34, and His65. The Proton acceptor role is filled by Asp34. Substrate contacts are provided by residues His65, 141–144, 174–176, and 196–197; these read GFSG, DGG, and GS. Asp174 provides a ligand contact to a divalent metal cation. Asp174 serves as the catalytic Proton donor.

This sequence belongs to the ribulose-phosphate 3-epimerase family. Requires a divalent metal cation as cofactor.

The catalysed reaction is D-ribulose 5-phosphate = D-xylulose 5-phosphate. The protein operates within carbohydrate degradation. Its function is as follows. Catalyzes the reversible epimerization of D-ribulose 5-phosphate to D-xylulose 5-phosphate. The chain is Ribulose-phosphate 3-epimerase from Aquifex aeolicus (strain VF5).